Here is a 757-residue protein sequence, read N- to C-terminus: Double zinc ribbon and ankyrin repeat-containing protein 1 (757 aa).

DZANK-type zinc fingers lie at residues 230–290 (CAHC…VVCE) and 359–407 (CSRC…GSCG). 2 ANK repeats span residues 631–662 (ENRL…DPNC) and 666–695 (QGRP…DIDQ).

In terms of assembly, interacts with NINL. Associates with DYNC1H1 and multiple dynein intermediate and light chains as well as actin-binding proteins. Expressed in retina.

Its subcellular location is the cell projection. The protein resides in the cilium. Its function is as follows. Involved in vesicle transport in photoreceptor cells. This chain is Double zinc ribbon and ankyrin repeat-containing protein 1, found in Rattus norvegicus (Rat).